We begin with the raw amino-acid sequence, 739 residues long: Phosphoribosylformylglycinamidine synthase subunit PurL (739 aa).

Histidine 54 is a catalytic residue. ATP is bound by residues tyrosine 57 and lysine 96. Residue glutamate 98 participates in Mg(2+) binding. Substrate is bound by residues 99–102 and arginine 121; that span reads SHNH. Histidine 100 (proton acceptor) is an active-site residue. Aspartate 122 lines the Mg(2+) pocket. Position 245 (glutamine 245) interacts with substrate. Aspartate 273 is a binding site for Mg(2+). 317–319 contributes to the substrate binding site; the sequence is ESQ. Aspartate 500 and glycine 537 together coordinate ATP. Asparagine 538 is a Mg(2+) binding site. Serine 540 is a binding site for substrate.

This sequence belongs to the FGAMS family. As to quaternary structure, monomer. Part of the FGAM synthase complex composed of 1 PurL, 1 PurQ and 2 PurS subunits.

The protein resides in the cytoplasm. The catalysed reaction is N(2)-formyl-N(1)-(5-phospho-beta-D-ribosyl)glycinamide + L-glutamine + ATP + H2O = 2-formamido-N(1)-(5-O-phospho-beta-D-ribosyl)acetamidine + L-glutamate + ADP + phosphate + H(+). It participates in purine metabolism; IMP biosynthesis via de novo pathway; 5-amino-1-(5-phospho-D-ribosyl)imidazole from N(2)-formyl-N(1)-(5-phospho-D-ribosyl)glycinamide: step 1/2. Its function is as follows. Part of the phosphoribosylformylglycinamidine synthase complex involved in the purines biosynthetic pathway. Catalyzes the ATP-dependent conversion of formylglycinamide ribonucleotide (FGAR) and glutamine to yield formylglycinamidine ribonucleotide (FGAM) and glutamate. The FGAM synthase complex is composed of three subunits. PurQ produces an ammonia molecule by converting glutamine to glutamate. PurL transfers the ammonia molecule to FGAR to form FGAM in an ATP-dependent manner. PurS interacts with PurQ and PurL and is thought to assist in the transfer of the ammonia molecule from PurQ to PurL. This chain is Phosphoribosylformylglycinamidine synthase subunit PurL, found in Exiguobacterium sp. (strain ATCC BAA-1283 / AT1b).